A 628-amino-acid polypeptide reads, in one-letter code: (+)-alpha pinene synthase 1, chloroplastic (628 aa).

The transit peptide at 1–18 (MALVSAVPLNSKLCLCRT) directs the protein to the chloroplast. 3 residues coordinate Mg(2+): aspartate 379, aspartate 383, and aspartate 531. A DDXXD motif motif is present at residues 379–383 (DDIYD).

It belongs to the terpene synthase family. Tpsd subfamily. It depends on Mg(2+) as a cofactor. Requires Mn(2+) as cofactor.

It localises to the plastid. It is found in the chloroplast. The enzyme catalyses (2E)-geranyl diphosphate = (1R,5R)-alpha-pinene + diphosphate. Its pathway is terpene metabolism; oleoresin biosynthesis. It functions in the pathway secondary metabolite biosynthesis; terpenoid biosynthesis. Monoterpene synthase (TPS) involved in the biosynthesis of monoterpene natural products included in conifer oleoresin secretions and volatile emissions; these compounds contribute to biotic and abiotic stress defense against herbivores and pathogens. Catalyzes the conversion of (2E)-geranyl diphosphate (GPP) to (+)-alpha-pinene. This chain is (+)-alpha pinene synthase 1, chloroplastic, found in Pinus banksiana (Jack pine).